The primary structure comprises 205 residues: Ribosomal RNA large subunit methyltransferase E (205 aa).

S-adenosyl-L-methionine is bound by residues Gly60, Trp62, Asp80, Asp96, and Asp121. Catalysis depends on Lys161, which acts as the Proton acceptor.

The protein belongs to the class I-like SAM-binding methyltransferase superfamily. RNA methyltransferase RlmE family.

Its subcellular location is the cytoplasm. It catalyses the reaction uridine(2552) in 23S rRNA + S-adenosyl-L-methionine = 2'-O-methyluridine(2552) in 23S rRNA + S-adenosyl-L-homocysteine + H(+). Functionally, specifically methylates the uridine in position 2552 of 23S rRNA at the 2'-O position of the ribose in the fully assembled 50S ribosomal subunit. The chain is Ribosomal RNA large subunit methyltransferase E from Dechloromonas aromatica (strain RCB).